A 437-amino-acid chain; its full sequence is Lipopolysaccharide biosynthesis protein RfbH (437 aa).

It belongs to the DegT/DnrJ/EryC1 family. The cofactor is pyridoxal 5'-phosphate.

The protein operates within bacterial outer membrane biogenesis; LPS O-antigen biosynthesis. The polypeptide is Lipopolysaccharide biosynthesis protein RfbH (rfbH) (Salmonella typhimurium (strain LT2 / SGSC1412 / ATCC 700720)).